We begin with the raw amino-acid sequence, 155 residues long: Glutaredoxin-related protein 5, mitochondrial (155 aa).

Residues 1 to 14 (MNSVFRSTARCLRS) constitute a mitochondrion transit peptide. Residues 42-145 (QKNLEEMVKK…EELQKLGIRS (104 aa)) enclose the Glutaredoxin domain. Lys-59 is a binding site for glutathione. Cys-67 contributes to the [2Fe-2S] cluster binding site. Glutathione contacts are provided by residues 97–101 (RQGIK), Ile-109, and 122–123 (CD).

In terms of assembly, homodimer.

Its subcellular location is the mitochondrion. Its function is as follows. Monothiol glutaredoxin involved in mitochondrial iron-sulfur (Fe/S) cluster transfer. Receives iron-sulfur clusters from scaffold protein ISCU and mediates their transfer to apoproteins, to the 4Fe/FS cluster biosynthesis machinery, or export from mitochondrion. Required for normal hemoglobin biosynthesis. The polypeptide is Glutaredoxin-related protein 5, mitochondrial (glrx5) (Danio rerio (Zebrafish)).